The primary structure comprises 99 residues: NADH-quinone oxidoreductase subunit K (99 aa).

The next 3 membrane-spanning stretches (helical) occupy residues 3–23 (VTAY…GVLI), 28–48 (IVVF…LVAF), and 59–79 (IAAF…LAII).

This sequence belongs to the complex I subunit 4L family. As to quaternary structure, NDH-1 is composed of 14 different subunits. Subunits NuoA, H, J, K, L, M, N constitute the membrane sector of the complex.

Its subcellular location is the cell membrane. The catalysed reaction is a quinone + NADH + 5 H(+)(in) = a quinol + NAD(+) + 4 H(+)(out). Its function is as follows. NDH-1 shuttles electrons from NADH, via FMN and iron-sulfur (Fe-S) centers, to quinones in the respiratory chain. The immediate electron acceptor for the enzyme in this species is believed to be a menaquinone. Couples the redox reaction to proton translocation (for every two electrons transferred, four hydrogen ions are translocated across the cytoplasmic membrane), and thus conserves the redox energy in a proton gradient. This is NADH-quinone oxidoreductase subunit K from Nocardioides sp. (strain ATCC BAA-499 / JS614).